Reading from the N-terminus, the 428-residue chain is D-amino acid dehydrogenase (428 aa).

Position 3-17 (3-17) interacts with FAD; the sequence is VVVLGSGVVGVASAY.

The protein belongs to the DadA oxidoreductase family. FAD is required as a cofactor.

It carries out the reaction a D-alpha-amino acid + A + H2O = a 2-oxocarboxylate + AH2 + NH4(+). Its pathway is amino-acid degradation; D-alanine degradation; NH(3) and pyruvate from D-alanine: step 1/1. Functionally, oxidative deamination of D-amino acids. The polypeptide is D-amino acid dehydrogenase (Burkholderia ambifaria (strain MC40-6)).